The following is a 950-amino-acid chain: MLLLGILTLAFAGRTAGGSEPEREVVVPIRLDPDINGRRYYWRGPEDSGDQGLIFQITAFQEDFYLHLTPDAQFLAPAFSTEHLGVPLQGLTGGSSDLRRCFYSGDVNAEPDSFAAVSLCGGLRGAFGYRGAEYVISPLPNASAPAAQRNSQGAHLLQRRGVPGGPSGDPTSRCGVASGWNPAILRALDPYKPRRAGFGESRSRRRSGRAKRFVSIPRYVETLVVADESMVKFHGADLEHYLLTLLATAARLYRHPSILNPINIVVVKVLLLRDRDSGPKVTGNAALTLRNFCAWQKKLNKVSDKHPEYWDTAILFTRQDLCGATTCDTLGMADVGTMCDPKRSCSVIEDDGLPSAFTTAHELGHVFNMPHDNVKVCEEVFGKLRANHMMSPTLIQIDRANPWSACSAAIITDFLDSGHGDCLLDQPSKPISLPEDLPGASYTLSQQCELAFGVGSKPCPYMQYCTKLWCTGKAKGQMVCQTRHFPWADGTSCGEGKLCLKGACVERHNLNKHRVDGSWAKWDPYGPCSRTCGGGVQLARRQCTNPTPANGGKYCEGVRVKYRSCNLEPCPSSASGKSFREEQCEAFNGYNHSTNRLTLAVAWVPKYSGVSPRDKCKLICRANGTGYFYVLAPKVVDGTLCSPDSTSVCVQGKCIKAGCDGNLGSKKRFDKCGVCGGDNKSCKKVTGLFTKPMHGYNFVVAIPAGASSIDIRQRGYKGLIGDDNYLALKNSQGKYLLNGHFVVSAVERDLVVKGSLLRYSGTGTAVESLQASRPILEPLTVEVLSVGKMTPPRVRYSFYLPKEPREDKSSHPKDPRGPSVLHNSVLSLSNQVEQPDDRPPARWVAGSWGPCSASCGSGLQKRAVDCRGSAGQRTVPACDAAHRPVETQACGEPCPTWELSAWSPCSKSCGRGFQRRSLKCVGHGGRLLARDQCNLHRKPQELDFCVLRPC.

The N-terminal stretch at 1-17 (MLLLGILTLAFAGRTAG) is a signal peptide. Residues 18 to 212 (GSEPEREVVV…SRRRSGRAKR (195 aa)) constitute a propeptide that is removed on maturation. N-linked (GlcNAc...) asparagine glycosylation occurs at asparagine 141. The disordered stretch occupies residues 151–172 (SQGAHLLQRRGVPGGPSGDPTS). Residues 172–179 (SRCGVASG) carry the Cysteine switch motif. A Zn(2+)-binding site is contributed by cysteine 174. The Peptidase M12B domain occupies 218-427 (RYVETLVVAD…GHGDCLLDQP (210 aa)). 11 disulfides stabilise this stretch: cysteine 293–cysteine 345, cysteine 322–cysteine 327, cysteine 339–cysteine 422, cysteine 377–cysteine 406, cysteine 448–cysteine 470, cysteine 459–cysteine 480, cysteine 465–cysteine 499, cysteine 493–cysteine 504, cysteine 528–cysteine 565, cysteine 532–cysteine 570, and cysteine 543–cysteine 555. A Zn(2+)-binding site is contributed by histidine 361. Residue glutamate 362 is part of the active site. Zn(2+) is bound by residues histidine 365 and histidine 371. In terms of domain architecture, Disintegrin spans 428–515 (SKPISLPEDL…ERHNLNKHRV (88 aa)). The TSP type-1 1 domain maps to 516-571 (DGSWAKWDPYGPCSRTCGGGVQLARRQCTNPTPANGGKYCEGVRVKYRSCNLEPCP). N-linked (GlcNAc...) asparagine glycans are attached at residues asparagine 591, asparagine 623, and asparagine 679. The segment at 701 to 838 (AIPAGASSID…SNQVEQPDDR (138 aa)) is spacer. The segment at 798–822 (FYLPKEPREDKSSHPKDPRGPSVLH) is disordered. Residues 802 to 816 (KEPREDKSSHPKDPR) show a composition bias toward basic and acidic residues. 2 consecutive TSP type-1 domains span residues 839–895 (PPAR…EPCP) and 896–949 (TWEL…VLRP).

Zn(2+) is required as a cofactor. The precursor is cleaved by a furin endopeptidase. Post-translationally, glycosylated. Can be O-fucosylated by POFUT2 on a serine or a threonine residue found within the consensus sequence C1-X(2)-(S/T)-C2-G of the TSP type-1 repeat domains where C1 and C2 are the first and second cysteine residue of the repeat, respectively. Fucosylated repeats can then be further glycosylated by the addition of a beta-1,3-glucose residue by the glucosyltransferase, B3GALTL. Fucosylation mediates the efficient secretion of ADAMTS family members. Can be C-glycosylated with one or two mannose molecules on tryptophan residues within the consensus sequence W-X-X-W of the TPRs. Also N-glycosylated. These other glycosylations can also facilitate secretion. As to expression, expressed in fetal liver and kidney, but not in any of the adult tissues examined.

It is found in the secreted. The protein localises to the extracellular space. The protein resides in the extracellular matrix. It localises to the cell surface. Functionally, metalloprotease which has proteolytic activity against the proteoglycan VCAN, cleaving it at the 'Glu-1428-|-1429-Ala' site. Cleaves VCAN in the pericellular matrix surrounding myoblasts, facilitating myoblast contact and fusion which is required for skeletal muscle development and regeneration. In Homo sapiens (Human), this protein is A disintegrin and metalloproteinase with thrombospondin motifs 15 (ADAMTS15).